The sequence spans 335 residues: GTPase Obg (335 aa).

Residues 4 to 162 enclose the Obg domain; sequence GNFVDYTKIY…ADIVLELKVL (159 aa). One can recognise an OBG-type G domain in the interval 163–332; that stretch reads ADVGLVGFPN…LKDKLWAMLN (170 aa). Residues 169-176, 194-198, 216-219, 283-286, and 313-315 each bind GTP; these read GFPNAGKS, FTTLK, DIPG, SKCD, and SSI. Mg(2+) contacts are provided by serine 176 and threonine 196.

It belongs to the TRAFAC class OBG-HflX-like GTPase superfamily. OBG GTPase family. As to quaternary structure, monomer. It depends on Mg(2+) as a cofactor.

Its subcellular location is the cytoplasm. In terms of biological role, an essential GTPase which binds GTP, GDP and possibly (p)ppGpp with moderate affinity, with high nucleotide exchange rates and a fairly low GTP hydrolysis rate. Plays a role in control of the cell cycle, stress response, ribosome biogenesis and in those bacteria that undergo differentiation, in morphogenesis control. The chain is GTPase Obg from Flavobacterium psychrophilum (strain ATCC 49511 / DSM 21280 / CIP 103535 / JIP02/86).